The sequence spans 316 residues: Probable cell division protein WhiA (316 aa).

The H-T-H motif DNA-binding region spans 277-310 (SLEQLGRLADPPITKDAIAGRIRRLLQLAEKTEK).

It belongs to the WhiA family.

Functionally, involved in cell division and chromosome segregation. The chain is Probable cell division protein WhiA from Bifidobacterium adolescentis (strain ATCC 15703 / DSM 20083 / NCTC 11814 / E194a).